Consider the following 182-residue polypeptide: CDP-diacylglycerol--glycerol-3-phosphate 3-phosphatidyltransferase (182 aa).

Residues 1–12 lie on the Cytoplasmic side of the membrane; it reads MQLNIPTWLTLF. The chain crosses the membrane as a helical span at residues 13 to 37; it reads RVVLIPFFVLAFYLPFVWAPMVCAI. Over 38–60 the chain is Periplasmic; it reads IFVFAAATDWFDGFLARRWKQTT. The chain crosses the membrane as a helical span at residues 61 to 81; that stretch reads RFGAFLDPVADKVMVAVALVL. At 82-86 the chain is on the cytoplasmic side; that stretch reads VAEHY. The helical transmembrane segment at 87–107 threads the bilayer; the sequence is HSWWITLPAATMIAREIIISS. The Periplasmic segment spans residues 108-145; it reads LREWMAEIGKRSSVAVSWVGKVKTMAQMGSLVGLLWRP. A helical transmembrane segment spans residues 146–168; it reads DHNVELASFVLLYIAAVLTFWSM. The Cytoplasmic segment spans residues 169–181; the sequence is FQYLNAAWSDLLE.

The protein belongs to the CDP-alcohol phosphatidyltransferase class-I family.

The protein localises to the cell inner membrane. It carries out the reaction a CDP-1,2-diacyl-sn-glycerol + sn-glycerol 3-phosphate = a 1,2-diacyl-sn-glycero-3-phospho-(1'-sn-glycero-3'-phosphate) + CMP + H(+). The protein operates within phospholipid metabolism; phosphatidylglycerol biosynthesis; phosphatidylglycerol from CDP-diacylglycerol: step 1/2. Its function is as follows. Catalyzes the conversion of cytidine diphosphate diacylglycerol (CDP-DG) and glycerol 3-phosphate into phosphatidylglycerol. Essential for the synthesis of anionic phospholipids, thereby playing a role in balancing the ratio of zwitterionic and anionic phospholipids, which is thought to be important for normal membrane function. The polypeptide is CDP-diacylglycerol--glycerol-3-phosphate 3-phosphatidyltransferase (Yersinia pestis bv. Antiqua (strain Antiqua)).